The following is a 1499-amino-acid chain: Streptococcal surface protein B (1499 aa).

Positions 1-37 are cleaved as a signal peptide; the sequence is MQKREVFGFRKSKVAKTLCGAVLGAALIAIADQQVLA. The tract at residues 50-84 is disordered; it reads AVTTTGNPATNLPEAQGEATEAASQSQAQAGSKDG. Ag I/II A repeat units lie at residues 145–219, 220–301, 302–383, and 384–465; these read KKTT…QKAN, EDSQ…KKAK, EDND…KQAN, and ATNE…KKDF. 3 disordered regions span residues 689–709, 763–907, and 1409–1472; these read YADS…SEWD, TAPT…TPPV, and RTTT…TGTN. Residues 694 to 705 show a composition bias toward basic and acidic residues; it reads NAEKSRGARWDT. Pro residues predominate over residues 789-799; that stretch reads PTPPVKTPDQP. Over residues 800–815 the composition is skewed to basic and acidic residues; that stretch reads EPSKPEEPTYETEKPL. A compositionally biased stretch (pro residues) spans 828–838; sequence PTPPVKIPDQP. The segment covering 839–854 has biased composition (basic and acidic residues); the sequence is EPSKPEEPTYETEKPL. Composition is skewed to pro residues over residues 867–877 and 888–907; these read PTPPVKTPDQP and DPLP…TPPV. Basic and acidic residues predominate over residues 1428–1450; the sequence is KPKDPDKPETPKEPKVPSPKVED. An LPXTG sorting signal motif is present at residues 1466-1470; that stretch reads LPKTG. T1469 carries the pentaglycyl murein peptidoglycan amidated threonine modification. Residues 1470-1499 constitute a propeptide, removed by sortase; sequence GTNDATYMPYLGLAALVGFLGLGLAKRKED.

Belongs to the antigen I/II family.

It is found in the secreted. It localises to the cell wall. The protein localises to the cell surface. Adhesin that mediates binding of bacteria to a variety of host cells. Plays a role in the bacterial invasion of dentinal tubules. A host immunostimulatory component, it modulates the innate immunity response. Plays a protective role against some antibiotics and cationic antimicrobial peptides (histatin-5, HTN3, but not beta-defensin 4A, DEFB4A). This chain is Streptococcal surface protein B, found in Streptococcus gordonii (strain Challis / ATCC 35105 / BCRC 15272 / CH1 / DL1 / V288).